Consider the following 282-residue polypeptide: Bifunctional protein FolD (282 aa).

NADP(+) contacts are provided by residues Gly165–Ser167 and Ser190.

This sequence belongs to the tetrahydrofolate dehydrogenase/cyclohydrolase family. As to quaternary structure, homodimer.

The enzyme catalyses (6R)-5,10-methylene-5,6,7,8-tetrahydrofolate + NADP(+) = (6R)-5,10-methenyltetrahydrofolate + NADPH. The catalysed reaction is (6R)-5,10-methenyltetrahydrofolate + H2O = (6R)-10-formyltetrahydrofolate + H(+). Its pathway is one-carbon metabolism; tetrahydrofolate interconversion. Catalyzes the oxidation of 5,10-methylenetetrahydrofolate to 5,10-methenyltetrahydrofolate and then the hydrolysis of 5,10-methenyltetrahydrofolate to 10-formyltetrahydrofolate. The sequence is that of Bifunctional protein FolD from Acinetobacter baumannii (strain ATCC 17978 / DSM 105126 / CIP 53.77 / LMG 1025 / NCDC KC755 / 5377).